Here is a 340-residue protein sequence, read N- to C-terminus: Uroporphyrinogen decarboxylase (340 aa).

Substrate is bound by residues 21-25 (RQAGR), Asp-71, Tyr-147, Ser-202, and His-315.

The protein belongs to the uroporphyrinogen decarboxylase family. Homodimer.

It localises to the cytoplasm. It carries out the reaction uroporphyrinogen III + 4 H(+) = coproporphyrinogen III + 4 CO2. The protein operates within porphyrin-containing compound metabolism; protoporphyrin-IX biosynthesis; coproporphyrinogen-III from 5-aminolevulinate: step 4/4. Functionally, catalyzes the decarboxylation of four acetate groups of uroporphyrinogen-III to yield coproporphyrinogen-III. In Nautilia profundicola (strain ATCC BAA-1463 / DSM 18972 / AmH), this protein is Uroporphyrinogen decarboxylase.